Consider the following 292-residue polypeptide: RNA 5'-monophosphate methyltransferase (292 aa).

The segment at 1 to 22 (MAASTEQATGGVEKTAAEEKPR) is disordered. Residues Arg46, Asn76, Asp110, 135 to 136 (DF), and Met164 contribute to the S-adenosyl-L-methionine site. Residues 53 to 274 (ELLRRLFPQS…KQATETHPIP (222 aa)) enclose the Bin3-type SAM domain.

Belongs to the methyltransferase superfamily. Interacts with DICER1; the interaction may be mediated by RNA.

Its subcellular location is the cytoplasm. It catalyses the reaction a 5'-end 5'-phospho-ribonucleoside-RNA + S-adenosyl-L-methionine = a 5'-end (5'-methylphospho)-ribonucleoside-RNA + S-adenosyl-L-homocysteine. The enzyme catalyses a 5'-end 5'-phospho-ribonucleoside-RNA + 2 S-adenosyl-L-methionine = a 5'-end (5'-bismethylphospho)-ribonucleoside-RNA + 2 S-adenosyl-L-homocysteine. Functionally, O-methyltransferase that specifically monomethylates 5'-monophosphate of cytoplasmic histidyl tRNA (tRNA(His)), acting as a capping enzyme by protecting tRNA(His) from cleavage by DICER1. Also able, with less efficiently, to methylate the 5' monophosphate of a subset of pre-miRNAs, acting as a negative regulator of miRNA processing. The 5' monophosphate of pre-miRNAs is recognized by DICER1 and is required for pre-miRNAs processing: methylation at this position reduces the processing of pre-miRNAs by DICER1. Was also reported to mediate dimethylation of pre-miR-145; however dimethylation cannot be reproduced by another group which observes a monomethylation of pre-miR-145. This chain is RNA 5'-monophosphate methyltransferase (BCDIN3D), found in Bos taurus (Bovine).